Here is a 370-residue protein sequence, read N- to C-terminus: Cytochrome b (370 aa).

The next 4 membrane-spanning stretches (helical) occupy residues 25–45, 69–90, 105–125, and 170–190; these read FGSM…FLAI, WIMQ…YTHI, WLSG…GYVL, and FFAL…IHIV. 2 residues coordinate heme b: His75 and His89. Heme b contacts are provided by His174 and His188. Position 193 (His193) interacts with a ubiquinone. Helical transmembrane passes span 218 to 238, 280 to 300, 312 to 332, and 339 to 358; these read YKDM…MSFM, LGGT…PFTH, LTQI…WTAT, and FITI…IINP.

The protein belongs to the cytochrome b family. The cytochrome bc1 complex contains 3 respiratory subunits (MT-CYB, CYC1 and UQCRFS1), 2 core proteins (UQCRC1 and UQCRC2) and probably 6 low-molecular weight proteins. Heme b is required as a cofactor.

Its subcellular location is the mitochondrion inner membrane. Component of the ubiquinol-cytochrome c reductase complex (complex III or cytochrome b-c1 complex) that is part of the mitochondrial respiratory chain. The b-c1 complex mediates electron transfer from ubiquinol to cytochrome c. Contributes to the generation of a proton gradient across the mitochondrial membrane that is then used for ATP synthesis. The chain is Cytochrome b (MT-CYB) from Micropechis ikaheca (New Guinean small-eyed snake).